The following is a 223-amino-acid chain: Transmembrane protein 114 (223 aa).

A helical transmembrane segment spans residues 7–27; the sequence is GLAGAAALTGALSFVLLAAAI. N-linked (GlcNAc...) asparagine glycans are attached at residues N55 and N89. 3 helical membrane passes run 106 to 126, 134 to 154, and 189 to 209; these read FVIL…TGFL, LLLL…LAGI, and LALG…FLAA.

The protein belongs to the PMP-22/EMP/MP20 family.

Its subcellular location is the cell junction. It is found in the tight junction. It localises to the lateral cell membrane. The protein resides in the apical cell membrane. The protein is Transmembrane protein 114 of Homo sapiens (Human).